Reading from the N-terminus, the 93-residue chain is Ribonuclease P protein component 1 (93 aa).

This sequence belongs to the eukaryotic/archaeal RNase P protein component 1 family. In terms of assembly, consists of a catalytic RNA component and at least 4-5 protein subunits.

The protein localises to the cytoplasm. It catalyses the reaction Endonucleolytic cleavage of RNA, removing 5'-extranucleotides from tRNA precursor.. Functionally, part of ribonuclease P, a protein complex that generates mature tRNA molecules by cleaving their 5'-ends. The sequence is that of Ribonuclease P protein component 1 from Methanosphaera stadtmanae (strain ATCC 43021 / DSM 3091 / JCM 11832 / MCB-3).